Reading from the N-terminus, the 233-residue chain is Small ribosomal subunit protein uS3 (233 aa).

The KH type-2 domain maps to 39 to 107 (IRTFLKRKLY…EVNINIKEER (69 aa)). The segment at 211–233 (GVQPEKTEESAPAKKPRRARRGK) is disordered. Over residues 213-222 (QPEKTEESAP) the composition is skewed to basic and acidic residues. The span at 224–233 (KKPRRARRGK) shows a compositional bias: basic residues.

This sequence belongs to the universal ribosomal protein uS3 family. Part of the 30S ribosomal subunit. Forms a tight complex with proteins S10 and S14.

In terms of biological role, binds the lower part of the 30S subunit head. Binds mRNA in the 70S ribosome, positioning it for translation. The protein is Small ribosomal subunit protein uS3 of Campylobacter lari (strain RM2100 / D67 / ATCC BAA-1060).